Reading from the N-terminus, the 126-residue chain is MSTTRRRRPALIALVIIATCGCLALGWWQWTRFQSTSGTFQNLGYALQWPLFAWFCVYAYRNFVRYEETPPQPPTGGAAAEIPAGLLPERPKPAQQPPDDPVLREYNAYLAELAKDDARKQNRTTA.

The N-terminal stretch at 1–21 (MSTTRRRRPALIALVIIATCG) is a signal peptide. The N-palmitoyl cysteine moiety is linked to residue Cys22. Cys22 carries the S-diacylglycerol cysteine lipid modification. A helical transmembrane segment spans residues 40 to 60 (FQNLGYALQWPLFAWFCVYAY). Residues 70 to 101 (PPQPPTGGAAAEIPAGLLPERPKPAQQPPDDP) form a disordered region.

The protein to M.leprae ML1177.

It is found in the cell membrane. The protein is Putative lipoprotein LprD (lprD) of Mycobacterium tuberculosis (strain CDC 1551 / Oshkosh).